Reading from the N-terminus, the 570-residue chain is Guanine nucleotide-binding protein alpha-3 subunit (570 aa).

The region spanning 10 to 113 (RETLRAYLSK…WIEAIKHAIE (104 aa)) is the PH domain. The region spanning 144–570 (PVLKLLLLGT…IISKTLEFYC (427 aa)) is the G-alpha domain. The interval 147 to 160 (KLLLLGTGESGKST) is G1 motif. 152 to 159 (GTGESGKS) is a binding site for GTP. Position 159 (serine 159) interacts with Mg(2+). Composition is skewed to low complexity over residues 254–272 (NNNSNSSSLKNNSGGSSSS) and 290–316 (NSNSASPNGPSSSTTTSTINTHNRSNS). A disordered region spans residues 254 to 321 (NNNSNSSSLK…NRSNSDGSSN (68 aa)). The tract at residues 386-394 (DILKSRATT) is G2 motif. Residues 388 to 394 (LKSRATT), 414 to 418 (DVAGQ), 483 to 486 (NKID), and alanine 544 each bind GTP. Threonine 394 lines the Mg(2+) pocket. The interval 410–419 (FRIVDVAGQR) is G3 motif. The tract at residues 479-486 (ILFLNKID) is G4 motif. Residues 542-547 (TCATDT) are G5 motif.

It belongs to the G-alpha family. G proteins are composed of 3 units; alpha, beta and gamma. The alpha chain contains the guanine nucleotide binding site.

In terms of biological role, guanine nucleotide-binding proteins (G proteins) are involved as modulators or transducers in various transmembrane signaling systems. G alpha-3 plays a role in development. G alpha-3 mutants fail to aggregate. In Dictyostelium discoideum (Social amoeba), this protein is Guanine nucleotide-binding protein alpha-3 subunit (gpaC).